The sequence spans 1444 residues: Rho GTPase-activating protein 31 (1444 aa).

One can recognise a Rho-GAP domain in the interval 21 to 216 (CDLTEYLESS…FILNHVDQIF (196 aa)). Ser272 is subject to Phosphoserine. At Thr286 the chain carries Phosphothreonine. A phosphoserine mark is found at Ser346, Ser349, and Ser387. The disordered stretch occupies residues 398–427 (WGQEGMPPGAEGGFDVSSDRSHLQGAQARP). Ser476 is subject to Phosphoserine. Residues 504 to 631 (TNSTPCRTPP…ESSTLQESPR (128 aa)) are disordered. Residues 515 to 534 (ELQSLSSLEEFSFHGSESGG) show a composition bias toward low complexity. Residues 600–619 (NELEKRPNPEKVVEEGREAG) show a composition bias toward basic and acidic residues. A Phosphothreonine modification is found at Thr679. Disordered stretches follow at residues 688–893 (SSLG…EDDT) and 906–1108 (EPWE…SSLN). A phosphoserine mark is found at Ser701 and Ser712. A compositionally biased stretch (polar residues) spans 722–734 (PANQSTQGASTAA). The span at 735 to 745 (SREKPEPEQGL) shows a compositional bias: basic and acidic residues. Over residues 777-790 (LSPPLPPAPPPPTP) the composition is skewed to pro residues. Position 778 is a phosphoserine (Ser778). Thr789 is subject to Phosphothreonine. Residues 803–817 (GPEREDSSRKLRTDL) are compositionally biased toward basic and acidic residues. Positions 822–834 (LKSQDSPEISSLC) are enriched in polar residues. The segment covering 839-848 (ATPRHSDKQN) has biased composition (basic and acidic residues). The span at 960–977 (TVKSQWTLEVPSSSSCAN) shows a compositional bias: polar residues. The residue at position 974 (Ser974) is a Phosphoserine. A compositionally biased stretch (basic and acidic residues) spans 992 to 1008 (PRREITGWDEKALRSFR). Positions 1028–1038 (VQPNPAETSPI) are enriched in polar residues. Low complexity predominate over residues 1064 to 1075 (GPESSKESSPSV). Residues Ser1105, Ser1106, and Ser1178 each carry the phosphoserine modification. 2 stretches are compositionally biased toward polar residues: residues 1211 to 1224 (QIPQ…SGEN) and 1234 to 1245 (EGPSSTSGTTQK). The interval 1211-1346 (QIPQPLPSQS…HRSRPGRPQS (136 aa)) is disordered. Basic and acidic residues predominate over residues 1246 to 1265 (PAKDDSPSSLESSKEEKPKQ). Polar residues-rich tracts occupy residues 1292-1303 (PGSSNLLSTQDA) and 1314-1323 (TEPSGDNLLS).

As to quaternary structure, interacts with ITSN1, which inhibits GAP activity. Interacts with PARVA. Interacts with GTP-loaded RHOU. Post-translationally, phosphorylation on Thr-789 reduces GAP activity.

It is found in the cell projection. It localises to the lamellipodium. Its subcellular location is the cell junction. The protein resides in the focal adhesion. In terms of biological role, functions as a GTPase-activating protein (GAP) for RAC1 and CDC42. Required for cell spreading, polarized lamellipodia formation and cell migration. This Homo sapiens (Human) protein is Rho GTPase-activating protein 31 (ARHGAP31).